The sequence spans 56 residues: Photosystem II reaction center X protein (56 aa).

The chain crosses the membrane as a helical span at residues 27-47 (IGSFLAAGALIVAPAAAALIW).

The protein belongs to the PsbX family. Type 2 subfamily. In terms of assembly, PSII consists of a core antenna complex that captures photons, and an electron transfer chain that converts photonic excitation into a charge separation. PSII forms dimeric complexes.

Its subcellular location is the cellular thylakoid membrane. Its function is as follows. Involved in the binding and/or turnover of quinones at the Q(B) site of Photosystem II. In Prochlorococcus marinus (strain NATL2A), this protein is Photosystem II reaction center X protein.